The following is a 282-amino-acid chain: tRNA pseudouridine synthase B (282 aa).

Asp39 serves as the catalytic Nucleophile.

The protein belongs to the pseudouridine synthase TruB family. Type 1 subfamily.

The catalysed reaction is uridine(55) in tRNA = pseudouridine(55) in tRNA. Its function is as follows. Responsible for synthesis of pseudouridine from uracil-55 in the psi GC loop of transfer RNAs. In Borreliella burgdorferi (strain ATCC 35210 / DSM 4680 / CIP 102532 / B31) (Borrelia burgdorferi), this protein is tRNA pseudouridine synthase B.